Reading from the N-terminus, the 275-residue chain is Formamidopyrimidine-DNA glycosylase (275 aa).

Residue proline 2 is the Schiff-base intermediate with DNA of the active site. Glutamate 3 serves as the catalytic Proton donor. Catalysis depends on lysine 58, which acts as the Proton donor; for beta-elimination activity. The DNA site is built by histidine 93, arginine 111, and arginine 156. The FPG-type zinc finger occupies 241-275; the sequence is FVYDRAGQPCRVCNTPIRQIVQGQRSTYFCPTCQR. Arginine 265 acts as the Proton donor; for delta-elimination activity in catalysis.

This sequence belongs to the FPG family. Monomer. The cofactor is Zn(2+).

It catalyses the reaction Hydrolysis of DNA containing ring-opened 7-methylguanine residues, releasing 2,6-diamino-4-hydroxy-5-(N-methyl)formamidopyrimidine.. The catalysed reaction is 2'-deoxyribonucleotide-(2'-deoxyribose 5'-phosphate)-2'-deoxyribonucleotide-DNA = a 3'-end 2'-deoxyribonucleotide-(2,3-dehydro-2,3-deoxyribose 5'-phosphate)-DNA + a 5'-end 5'-phospho-2'-deoxyribonucleoside-DNA + H(+). Involved in base excision repair of DNA damaged by oxidation or by mutagenic agents. Acts as a DNA glycosylase that recognizes and removes damaged bases. Has a preference for oxidized purines, such as 7,8-dihydro-8-oxoguanine (8-oxoG). Has AP (apurinic/apyrimidinic) lyase activity and introduces nicks in the DNA strand. Cleaves the DNA backbone by beta-delta elimination to generate a single-strand break at the site of the removed base with both 3'- and 5'-phosphates. The chain is Formamidopyrimidine-DNA glycosylase from Burkholderia lata (strain ATCC 17760 / DSM 23089 / LMG 22485 / NCIMB 9086 / R18194 / 383).